The following is a 140-amino-acid chain: MRLSWVLTVLSICLSALVTATGTEGKRKLQIGVKKRVDHCPIKSRKGDVLHMHYTGKLEDGTEFDSSLPQNQPFVFSLGTGQVIKGWDQGLLGMCEGEKRKLVIPSELGYGERGAPPKIPGGATLVFEVELLKIERRSEL.

Residues 1 to 20 form the signal peptide; the sequence is MRLSWVLTVLSICLSALVTA. In terms of domain architecture, PPIase FKBP-type spans 47–135; sequence GDVLHMHYTG…VFEVELLKIE (89 aa).

It belongs to the FKBP-type PPIase family. FKBP2 subfamily. In terms of assembly, interacts with ARFGEF1/BIG1 and the C-terminal of EPB41L2.

The protein resides in the endoplasmic reticulum membrane. It carries out the reaction [protein]-peptidylproline (omega=180) = [protein]-peptidylproline (omega=0). Inhibited by both FK506 and rapamycin. Its function is as follows. PPIases accelerate the folding of proteins. It catalyzes the cis-trans isomerization of proline imidic peptide bonds in oligopeptides. In Bos taurus (Bovine), this protein is Peptidyl-prolyl cis-trans isomerase FKBP2 (FKBP2).